We begin with the raw amino-acid sequence, 504 residues long: Peptidyl-prolyl cis-trans isomerase-like 4 (504 aa).

The PPIase cyclophilin-type domain maps to 1-169 (MSVMLETSLG…QNIRIRHVEI (169 aa)). The RRM domain occupies 246-324 (NILFVCKLNP…RRIWVDFSQS (79 aa)). The span at 330-339 (RSMLSSSNPT) shows a compositional bias: polar residues. Residues 330-504 (RSMLSSSNPT…RERDDRDRRR (175 aa)) are disordered. The span at 340-354 (GRGGRGGRGGRGGNY) shows a compositional bias: gly residues. Composition is skewed to basic and acidic residues over residues 356–381 (GRRD…DSRR) and 416–504 (SKRD…DRRR).

It belongs to the cyclophilin-type PPIase family. PPIL4 subfamily.

Its subcellular location is the nucleus. The enzyme catalyses [protein]-peptidylproline (omega=180) = [protein]-peptidylproline (omega=0). Its function is as follows. PPIases accelerate the folding of proteins. It catalyzes the cis-trans isomerization of proline imidic peptide bonds in oligopeptides. The sequence is that of Peptidyl-prolyl cis-trans isomerase-like 4 (CYP6) from Cryptococcus neoformans var. neoformans serotype D (strain B-3501A) (Filobasidiella neoformans).